Here is a 528-residue protein sequence, read N- to C-terminus: Arginine--tRNA ligase (528 aa).

The short motif at 112 to 122 (ANPTGPLHIGH) is the 'HIGH' region element.

This sequence belongs to the class-I aminoacyl-tRNA synthetase family. In terms of assembly, monomer.

The protein resides in the cytoplasm. The enzyme catalyses tRNA(Arg) + L-arginine + ATP = L-arginyl-tRNA(Arg) + AMP + diphosphate. In Wolinella succinogenes (strain ATCC 29543 / DSM 1740 / CCUG 13145 / JCM 31913 / LMG 7466 / NCTC 11488 / FDC 602W) (Vibrio succinogenes), this protein is Arginine--tRNA ligase.